Consider the following 253-residue polypeptide: Ubiquinone/menaquinone biosynthesis C-methyltransferase UbiE (253 aa).

S-adenosyl-L-methionine contacts are provided by residues Thr76, Asp97, 125-126 (NA), and Ser142.

It belongs to the class I-like SAM-binding methyltransferase superfamily. MenG/UbiE family.

It carries out the reaction a 2-demethylmenaquinol + S-adenosyl-L-methionine = a menaquinol + S-adenosyl-L-homocysteine + H(+). The catalysed reaction is a 2-methoxy-6-(all-trans-polyprenyl)benzene-1,4-diol + S-adenosyl-L-methionine = a 5-methoxy-2-methyl-3-(all-trans-polyprenyl)benzene-1,4-diol + S-adenosyl-L-homocysteine + H(+). It functions in the pathway quinol/quinone metabolism; menaquinone biosynthesis; menaquinol from 1,4-dihydroxy-2-naphthoate: step 2/2. It participates in cofactor biosynthesis; ubiquinone biosynthesis. Methyltransferase required for the conversion of demethylmenaquinol (DMKH2) to menaquinol (MKH2) and the conversion of 2-polyprenyl-6-methoxy-1,4-benzoquinol (DDMQH2) to 2-polyprenyl-3-methyl-6-methoxy-1,4-benzoquinol (DMQH2). This chain is Ubiquinone/menaquinone biosynthesis C-methyltransferase UbiE, found in Xylella fastidiosa (strain 9a5c).